Reading from the N-terminus, the 251-residue chain is 3-deoxy-manno-octulosonate cytidylyltransferase (251 aa).

Belongs to the KdsB family.

Its subcellular location is the cytoplasm. It catalyses the reaction 3-deoxy-alpha-D-manno-oct-2-ulosonate + CTP = CMP-3-deoxy-beta-D-manno-octulosonate + diphosphate. It participates in nucleotide-sugar biosynthesis; CMP-3-deoxy-D-manno-octulosonate biosynthesis; CMP-3-deoxy-D-manno-octulosonate from 3-deoxy-D-manno-octulosonate and CTP: step 1/1. Its pathway is bacterial outer membrane biogenesis; lipopolysaccharide biosynthesis. Functionally, activates KDO (a required 8-carbon sugar) for incorporation into bacterial lipopolysaccharide in Gram-negative bacteria. The sequence is that of 3-deoxy-manno-octulosonate cytidylyltransferase from Rhizobium etli (strain ATCC 51251 / DSM 11541 / JCM 21823 / NBRC 15573 / CFN 42).